The primary structure comprises 358 residues: Phospho-N-acetylmuramoyl-pentapeptide-transferase (358 aa).

10 helical membrane passes run 21-41, 71-91, 95-115, 133-153, 166-186, 197-217, 234-254, 261-281, 286-306, and 337-357; these read YLTL…FVVG, TMGG…WADL, YIWV…VDDY, FWQS…ASVA, VAVN…VGSS, GLAV…AYAA, AGEL…FLWF, VFMG…LAVL, LVLF…MLQV, and IVRF…TLKI.

This sequence belongs to the glycosyltransferase 4 family. MraY subfamily. Mg(2+) serves as cofactor.

It localises to the cell inner membrane. It catalyses the reaction UDP-N-acetyl-alpha-D-muramoyl-L-alanyl-gamma-D-glutamyl-meso-2,6-diaminopimeloyl-D-alanyl-D-alanine + di-trans,octa-cis-undecaprenyl phosphate = di-trans,octa-cis-undecaprenyl diphospho-N-acetyl-alpha-D-muramoyl-L-alanyl-D-glutamyl-meso-2,6-diaminopimeloyl-D-alanyl-D-alanine + UMP. It functions in the pathway cell wall biogenesis; peptidoglycan biosynthesis. In terms of biological role, catalyzes the initial step of the lipid cycle reactions in the biosynthesis of the cell wall peptidoglycan: transfers peptidoglycan precursor phospho-MurNAc-pentapeptide from UDP-MurNAc-pentapeptide onto the lipid carrier undecaprenyl phosphate, yielding undecaprenyl-pyrophosphoryl-MurNAc-pentapeptide, known as lipid I. The protein is Phospho-N-acetylmuramoyl-pentapeptide-transferase of Nitrosococcus oceani (strain ATCC 19707 / BCRC 17464 / JCM 30415 / NCIMB 11848 / C-107).